A 321-amino-acid polypeptide reads, in one-letter code: Endochitinase 1 (321 aa).

The signal sequence occupies residues 1–21 (MSFRALSVFSLFLSYLILGSA). Positions 22–64 (EQCGRQAGGALCPGGLCCSQFGWCGNTDDYCKKENGCQSQCSG) constitute a Chitin-binding type-1 domain. 7 disulfides stabilise this stretch: Cys-24–Cys-39, Cys-33–Cys-45, Cys-38–Cys-52, Cys-58–Cys-62, Cys-93–Cys-156, Cys-167–Cys-175, and Cys-274–Cys-306. Residues 65-98 (SGGDTGGLDSLITRERFDQMLLHRNDGGCPARGF) form a hinge region. The interval 99–321 (YTYDAFIAAA…YNNGPSVDSM (223 aa)) is catalytic. Glu-137 functions as the Proton donor in the catalytic mechanism.

This sequence belongs to the glycosyl hydrolase 19 family. Chitinase class I subfamily.

The protein resides in the vacuole. It carries out the reaction Random endo-hydrolysis of N-acetyl-beta-D-glucosaminide (1-&gt;4)-beta-linkages in chitin and chitodextrins.. Functionally, defense against chitin-containing fungal pathogens. This chain is Endochitinase 1 (CHIA1), found in Theobroma cacao (Cacao).